Consider the following 99-residue polypeptide: UPF0213 protein spr1390 (99 aa).

One can recognise a GIY-YIG domain in the interval 3–78 (HKAYMYVLEC…KRKKRPQKEE (76 aa)).

Belongs to the UPF0213 family.

This chain is UPF0213 protein spr1390, found in Streptococcus pneumoniae (strain ATCC BAA-255 / R6).